The chain runs to 263 residues: UDP-N-acetylenolpyruvoylglucosamine reductase (263 aa).

Arg146 is a catalytic residue. The active-site Proton donor is the Ser188. Glu258 is a catalytic residue.

It belongs to the MurB family. FAD serves as cofactor.

The protein localises to the cytoplasm. It carries out the reaction UDP-N-acetyl-alpha-D-muramate + NADP(+) = UDP-N-acetyl-3-O-(1-carboxyvinyl)-alpha-D-glucosamine + NADPH + H(+). The protein operates within cell wall biogenesis; peptidoglycan biosynthesis. Functionally, cell wall formation. The protein is UDP-N-acetylenolpyruvoylglucosamine reductase of Helicobacter hepaticus (strain ATCC 51449 / 3B1).